A 277-amino-acid polypeptide reads, in one-letter code: MAPLRFSANVSWLFPELPGLPERLHAAGRAGFKAAEVAWPYTESPQALASAAQTAGLRLVLINTPRGDHEKGEMGLGAVPGRQAAFREGLEQAVLYAKALGCPRIHLMAGRVPQGADRAAVKGEMETVFVENLKHAAGVLAQENLVGLLEPINTRITDPQYFLDTPRQAAAILQKVGRPNLQLQMDIFHWQIMDGNLTGNIREFLPTVGHVQVAQVPDRGEPGSSGELDFTYLFQLLEDEGYQGFVGCEYRPRGDTVEGLSWLRSYWDRRGHPRTGQ.

Residues glutamate 150 and glutamate 249 each act as proton donor/acceptor in the active site.

The protein belongs to the hyi family.

The enzyme catalyses 3-hydroxypyruvate = 2-hydroxy-3-oxopropanoate. Catalyzes the reversible isomerization between hydroxypyruvate and 2-hydroxy-3-oxopropanoate (also termed tartronate semialdehyde). This chain is Putative hydroxypyruvate isomerase (Hyi), found in Mus musculus (Mouse).